A 355-amino-acid polypeptide reads, in one-letter code: Cobalt-precorrin-5B C(1)-methyltransferase (355 aa).

Belongs to the CbiD family.

It catalyses the reaction Co-precorrin-5B + S-adenosyl-L-methionine = Co-precorrin-6A + S-adenosyl-L-homocysteine. The protein operates within cofactor biosynthesis; adenosylcobalamin biosynthesis; cob(II)yrinate a,c-diamide from sirohydrochlorin (anaerobic route): step 6/10. Its function is as follows. Catalyzes the methylation of C-1 in cobalt-precorrin-5B to form cobalt-precorrin-6A. The protein is Cobalt-precorrin-5B C(1)-methyltransferase of Sulfolobus acidocaldarius (strain ATCC 33909 / DSM 639 / JCM 8929 / NBRC 15157 / NCIMB 11770).